Consider the following 370-residue polypeptide: MTLPRSSRSVAVDGAQPYTITIAPGLLADGARLARHVRGRHALLLSDSQVAPHYAAGVRAALLSARPDLQIGELVIAAGEASKTLDTFGSAITALAELGATRDACVFALGGGVVGDLAGFAAACWMRGVDCVQLPTSLLAMVDSSVGGKTAVDIPQGKNLVGAFHPPRAVLADTDTLRTLPARELRAGLAEVIKYGAIRDPLFFQWLHAERHALLDSDPAALAQAIARSCEHKAEIVARDPLEKGERALLNLGHTFGHAIETEQGYGAPGNDNLNHGEAVAVGMVLAARLSATLGMSNAQDTEALRALLHDFELPTDIPPGLPPEALLARMRLDKKNIAGRLRLVLWRGIGKAEVVPDVEEAAVLKILAG.

NAD(+) is bound by residues 112-116, 136-137, K149, K158, and 176-179; these read GVVGD, TS, and TLRT. Positions 191, 254, and 276 each coordinate Zn(2+).

It belongs to the sugar phosphate cyclases superfamily. Dehydroquinate synthase family. Requires Co(2+) as cofactor. It depends on Zn(2+) as a cofactor. NAD(+) serves as cofactor.

The protein localises to the cytoplasm. The enzyme catalyses 7-phospho-2-dehydro-3-deoxy-D-arabino-heptonate = 3-dehydroquinate + phosphate. It functions in the pathway metabolic intermediate biosynthesis; chorismate biosynthesis; chorismate from D-erythrose 4-phosphate and phosphoenolpyruvate: step 2/7. Functionally, catalyzes the conversion of 3-deoxy-D-arabino-heptulosonate 7-phosphate (DAHP) to dehydroquinate (DHQ). In Xanthomonas oryzae pv. oryzae (strain MAFF 311018), this protein is 3-dehydroquinate synthase.